A 72-amino-acid chain; its full sequence is Translation initiation factor IF-1 (72 aa).

Positions 1-72 (MAKEEMLEFP…TKGRINYRFK (72 aa)) constitute an S1-like domain.

The protein belongs to the IF-1 family. In terms of assembly, component of the 30S ribosomal translation pre-initiation complex which assembles on the 30S ribosome in the order IF-2 and IF-3, IF-1 and N-formylmethionyl-tRNA(fMet); mRNA recruitment can occur at any time during PIC assembly.

The protein localises to the cytoplasm. Its function is as follows. One of the essential components for the initiation of protein synthesis. Stabilizes the binding of IF-2 and IF-3 on the 30S subunit to which N-formylmethionyl-tRNA(fMet) subsequently binds. Helps modulate mRNA selection, yielding the 30S pre-initiation complex (PIC). Upon addition of the 50S ribosomal subunit IF-1, IF-2 and IF-3 are released leaving the mature 70S translation initiation complex. This is Translation initiation factor IF-1 from Paracoccus denitrificans (strain Pd 1222).